A 963-amino-acid chain; its full sequence is Protocadherin alpha-C1 (963 aa).

The N-terminal stretch at 1 to 18 is a signal peptide; it reads MVGCGVAVLCLWVSCGAA. 5 Cadherin domains span residues 19–124, 125–233, 234–340, 349–445, and 446–555; these read AGQL…SPLF, PAGD…APVF, ERSV…APEL, VPED…TPNF, and PQPQ…YPVI. Residues 19-683 lie on the Extracellular side of the membrane; the sequence is AGQLEYSVPE…GGQLSAQNLY (665 aa). Residue Asn-38 is glycosylated (N-linked (GlcNAc...) asparagine). N-linked (GlcNAc...) asparagine glycans are attached at residues Asn-248 and Asn-274. A glycan (N-linked (GlcNAc...) asparagine) is linked at Asn-562. Residues 570–667 enclose the Cadherin 6 domain; it reads VPRSARTGHL…NSVPQLLPDF (98 aa). Residues 684 to 704 form a helical membrane-spanning segment; that stretch reads LVIALACISFLFLGCLLFFVC. At 705-963 the chain is on the cytoplasmic side; it reads TKLHQSPGCC…GNSTTDNSDQ (259 aa). PXXP repeat units lie at residues 812-815, 845-848, 886-889, and 904-907; these read PRQP, PGGP, PGNP, and PGSP. The 4 X 4 AA repeats of P-X-X-P stretch occupies residues 812–907; that stretch reads PRQPNPDWRY…PDKFIIPGSP (96 aa). A disordered region spans residues 844–963; sequence GPGGPDQQWP…GNSTTDNSDQ (120 aa). A compositionally biased stretch (basic and acidic residues) spans 922-936; sequence DKSDFITFGKKEETK.

It is found in the cell membrane. Functionally, potential calcium-dependent cell-adhesion protein. May be involved in the establishment and maintenance of specific neuronal connections in the brain. The polypeptide is Protocadherin alpha-C1 (PCDHAC1) (Homo sapiens (Human)).